A 506-amino-acid polypeptide reads, in one-letter code: Probable alpha-L-arabinofuranosidase B (506 aa).

A signal peptide spans 1-26 (MLLPRGFNRAVVTALGVVGTGTLVAA). Residues 27–343 (GPCDIYSSGG…ANIVAAKYAV (317 aa)) are catalytic. Disulfide bonds link C29/C39, C89/C94, and C184/C185. D227 is a substrate binding site. E229 functions as the Nucleophile in the catalytic mechanism. N230 contributes to the substrate binding site. The N-linked (GlcNAc...) asparagine glycan is linked to N285. Residue G304 participates in substrate binding. The active-site Proton donor is D305. The ABD stretch occupies residues 344 to 506 (APLTSGPSLT…VSWVVSTSFA (163 aa)). N-linked (GlcNAc...) asparagine glycosylation occurs at N375. Residues C409 and C447 are joined by a disulfide bond. Residues H424, F427, D443, H471, L476, and D496 each contribute to the substrate site.

This sequence belongs to the glycosyl hydrolase 54 family.

It localises to the secreted. It catalyses the reaction Hydrolysis of terminal non-reducing alpha-L-arabinofuranoside residues in alpha-L-arabinosides.. Its pathway is glycan metabolism; L-arabinan degradation. In terms of biological role, alpha-L-arabinofuranosidase involved in the degradation of arabinoxylan, a major component of plant hemicellulose. Able to hydrolyze 1,5-, 1,3- and 1,2-alpha-linkages not only in L-arabinofuranosyl oligosaccharides, but also in polysaccharides containing terminal non-reducing L-arabinofuranoses in side chains, like L-arabinan, arabinogalactan and arabinoxylan. The protein is Probable alpha-L-arabinofuranosidase B (abfB) of Aspergillus terreus (strain NIH 2624 / FGSC A1156).